Consider the following 851-residue polypeptide: Periplasmic nitrate reductase (851 aa).

The segment at residues 1–29 (MQSNRRDFLKAQALAASAAAAGIPIVVEA) is a signal peptide (tat-type signal). The 4Fe-4S Mo/W bis-MGD-type domain occupies 44 to 100 (VRWDKAPCRFCGTGCAVMVGVQEGKVVATQGDPEAPVNRGLNCIKGYFLSKIMYGRD). C51, C54, C58, and C86 together coordinate [4Fe-4S] cluster. Residues K88, Q155, N180, C184, 217 to 224 (WGSNMAEM), 248 to 252 (STYEH), and 267 to 269 (QTD) each bind Mo-bis(molybdopterin guanine dinucleotide). The tract at residues 317-338 (DATSNGYPGADGKPKGNPNDST) is disordered. Residues M388, Q392, N498, 524 to 525 (SD), K547, D574, and 741 to 750 (TGRVLEHWHT) contribute to the Mo-bis(molybdopterin guanine dinucleotide) site. Position 817 (F817) interacts with substrate. N825 and K842 together coordinate Mo-bis(molybdopterin guanine dinucleotide).

Belongs to the prokaryotic molybdopterin-containing oxidoreductase family. NasA/NapA/NarB subfamily. Component of the periplasmic nitrate reductase NapAB complex composed of NapA and NapB. Requires [4Fe-4S] cluster as cofactor. Mo-bis(molybdopterin guanine dinucleotide) serves as cofactor. Predicted to be exported by the Tat system. The position of the signal peptide cleavage has not been experimentally proven.

Its subcellular location is the periplasm. It catalyses the reaction 2 Fe(II)-[cytochrome] + nitrate + 2 H(+) = 2 Fe(III)-[cytochrome] + nitrite + H2O. In terms of biological role, catalytic subunit of the periplasmic nitrate reductase complex NapAB. Receives electrons from NapB and catalyzes the reduction of nitrate to nitrite. The polypeptide is Periplasmic nitrate reductase (Leptothrix cholodnii (strain ATCC 51168 / LMG 8142 / SP-6) (Leptothrix discophora (strain SP-6))).